The primary structure comprises 238 residues: Phosphoribosylaminoimidazole-succinocarboxamide synthase (238 aa).

The protein belongs to the SAICAR synthetase family.

It catalyses the reaction 5-amino-1-(5-phospho-D-ribosyl)imidazole-4-carboxylate + L-aspartate + ATP = (2S)-2-[5-amino-1-(5-phospho-beta-D-ribosyl)imidazole-4-carboxamido]succinate + ADP + phosphate + 2 H(+). Its pathway is purine metabolism; IMP biosynthesis via de novo pathway; 5-amino-1-(5-phospho-D-ribosyl)imidazole-4-carboxamide from 5-amino-1-(5-phospho-D-ribosyl)imidazole-4-carboxylate: step 1/2. This chain is Phosphoribosylaminoimidazole-succinocarboxamide synthase, found in Chlorobium phaeovibrioides (strain DSM 265 / 1930) (Prosthecochloris vibrioformis (strain DSM 265)).